A 246-amino-acid chain; its full sequence is Polyhedrin (246 aa).

This sequence belongs to the polyhedrin family.

Functionally, major component of the virus occlusion bodies, which are large proteinaceous structures (polyhedra), that protect the virus from the outside environment for extended periods until they are ingested by insect larvae. The sequence is that of Polyhedrin (PH) from Lepidoptera (butterflies and moths).